A 258-amino-acid chain; its full sequence is Hemin import ATP-binding protein HmuV (258 aa).

The 241-residue stretch at 2–242 folds into the ABC transporter domain; sequence LTAEKLCVER…SKIEELYDFP (241 aa). 34 to 41 lines the ATP pocket; it reads GANGAGKS.

This sequence belongs to the ABC transporter superfamily. Heme (hemin) importer (TC 3.A.1.14.5) family. In terms of assembly, the complex is composed of two ATP-binding proteins (HmuV), two transmembrane proteins (HmuU) and a solute-binding protein (HmuT).

It is found in the cell inner membrane. In terms of biological role, part of the ABC transporter complex HmuTUV involved in hemin import. Responsible for energy coupling to the transport system. This is Hemin import ATP-binding protein HmuV from Hydrogenovibrio crunogenus (strain DSM 25203 / XCL-2) (Thiomicrospira crunogena).